A 200-amino-acid polypeptide reads, in one-letter code: MTEFTRHTGIVVPLDAANVDTDAIIPKQFLQKVTRSGFGRHLFHDWRFLDEAGERPNPAFVLNQPPFQQGSILLARENFGCGSSREHAPWALTDYGFRVVIAPSFADIFYGNAFNSQLLPIILDEAQIAALFTLVSASPGIAFSVDVEQQTLQAGDTRYTFTLDPFRRHCLIHGLDSIGLTLRHASAIDDYEARRPAFLR.

Belongs to the LeuD family. LeuD type 1 subfamily. Heterodimer of LeuC and LeuD.

It carries out the reaction (2R,3S)-3-isopropylmalate = (2S)-2-isopropylmalate. It functions in the pathway amino-acid biosynthesis; L-leucine biosynthesis; L-leucine from 3-methyl-2-oxobutanoate: step 2/4. Catalyzes the isomerization between 2-isopropylmalate and 3-isopropylmalate, via the formation of 2-isopropylmaleate. The protein is 3-isopropylmalate dehydratase small subunit of Edwardsiella ictaluri (strain 93-146).